The following is a 277-amino-acid chain: Phosphate import ATP-binding protein PstB 2 (277 aa).

In terms of domain architecture, ABC transporter spans 31 to 272 (IEVPGLNLFY…PAKKQTEDYI (242 aa)). 63-70 (GPSGCGKS) is a binding site for ATP.

It belongs to the ABC transporter superfamily. Phosphate importer (TC 3.A.1.7) family. In terms of assembly, the complex is composed of two ATP-binding proteins (PstB), two transmembrane proteins (PstC and PstA) and a solute-binding protein (PstS).

The protein resides in the cell inner membrane. The catalysed reaction is phosphate(out) + ATP + H2O = ADP + 2 phosphate(in) + H(+). Part of the ABC transporter complex PstSACB involved in phosphate import. Responsible for energy coupling to the transport system. This chain is Phosphate import ATP-binding protein PstB 2, found in Pseudomonas savastanoi pv. phaseolicola (strain 1448A / Race 6) (Pseudomonas syringae pv. phaseolicola (strain 1448A / Race 6)).